The chain runs to 98 residues: Large ribosomal subunit protein uL23 (98 aa).

This sequence belongs to the universal ribosomal protein uL23 family. In terms of assembly, part of the 50S ribosomal subunit. Contacts protein L29, and trigger factor when it is bound to the ribosome.

In terms of biological role, one of the early assembly proteins it binds 23S rRNA. One of the proteins that surrounds the polypeptide exit tunnel on the outside of the ribosome. Forms the main docking site for trigger factor binding to the ribosome. The polypeptide is Large ribosomal subunit protein uL23 (Limosilactobacillus reuteri (strain DSM 20016) (Lactobacillus reuteri)).